The primary structure comprises 101 residues: Chaperone modulatory protein CbpM (101 aa).

It belongs to the CbpM family.

Interacts with CbpA and inhibits both the DnaJ-like co-chaperone activity and the DNA binding activity of CbpA. Together with CbpA, modulates the activity of the DnaK chaperone system. Does not inhibit the co-chaperone activity of DnaJ. The chain is Chaperone modulatory protein CbpM from Pseudomonas entomophila (strain L48).